The primary structure comprises 93 residues: Small ribosomal subunit protein uS19 (93 aa).

This sequence belongs to the universal ribosomal protein uS19 family.

In terms of biological role, protein S19 forms a complex with S13 that binds strongly to the 16S ribosomal RNA. The polypeptide is Small ribosomal subunit protein uS19 (Mycobacterium sp. (strain JLS)).